A 21-amino-acid chain; its full sequence is Outer membrane protein A (21 aa).

Residues 6-16 (TWYTGAKLGWS) form a beta stranded membrane-spanning segment.

This sequence belongs to the outer membrane OOP (TC 1.B.6) superfamily. OmpA family. Monomer and homodimer.

It localises to the cell outer membrane. In terms of biological role, with TolR probably plays a role in maintaining the position of the peptidoglycan cell wall in the periplasm. Acts as a porin with low permeability that allows slow penetration of small solutes; an internal gate slows down solute passage. This chain is Outer membrane protein A, found in Actinobacillus lignieresii.